We begin with the raw amino-acid sequence, 314 residues long: Methionyl-tRNA formyltransferase (314 aa).

112-115 (SLLP) contacts (6S)-5,6,7,8-tetrahydrofolate.

This sequence belongs to the Fmt family.

The catalysed reaction is L-methionyl-tRNA(fMet) + (6R)-10-formyltetrahydrofolate = N-formyl-L-methionyl-tRNA(fMet) + (6S)-5,6,7,8-tetrahydrofolate + H(+). In terms of biological role, attaches a formyl group to the free amino group of methionyl-tRNA(fMet). The formyl group appears to play a dual role in the initiator identity of N-formylmethionyl-tRNA by promoting its recognition by IF2 and preventing the misappropriation of this tRNA by the elongation apparatus. The sequence is that of Methionyl-tRNA formyltransferase from Legionella pneumophila subsp. pneumophila (strain Philadelphia 1 / ATCC 33152 / DSM 7513).